The chain runs to 219 residues: MVKVKICGLITQEDAMLACQYGADLLGFNFYEKSPRYISPAKAAEIIKTLPSNVASVGVFVGKEANEINQICEEAMIDIAQIHDESLCAKDFTKLRPKIIKAFRVQNTFDTREIRRFYEQTGVNTFIFDAFQKDLYGGTGKRLDVELAHKVFKEIEGFGYGFLAGGLNEKNVETTVRLLKPYGVDVASGIESEPGKKAHDKMALFIREAKKSLCLEPGY.

This sequence belongs to the TrpF family.

The enzyme catalyses N-(5-phospho-beta-D-ribosyl)anthranilate = 1-(2-carboxyphenylamino)-1-deoxy-D-ribulose 5-phosphate. Its pathway is amino-acid biosynthesis; L-tryptophan biosynthesis; L-tryptophan from chorismate: step 3/5. In Chloroherpeton thalassium (strain ATCC 35110 / GB-78), this protein is N-(5'-phosphoribosyl)anthranilate isomerase.